The sequence spans 776 residues: Probable exo-1,4-beta-xylosidase bxlB (776 aa).

Positions 1–23 (MVHLSPLLRPLAAFSFFTSLAST) are cleaved as a signal peptide. Asn65 and Asn105 each carry an N-linked (GlcNAc...) asparagine glycan. Residue Asp291 is part of the active site. Asn343, Asn410, Asn421, Asn462, Asn623, and Asn766 each carry an N-linked (GlcNAc...) asparagine glycan.

It belongs to the glycosyl hydrolase 3 family.

It is found in the secreted. It catalyses the reaction Hydrolysis of (1-&gt;4)-beta-D-xylans, to remove successive D-xylose residues from the non-reducing termini.. It participates in glycan degradation; xylan degradation. Its function is as follows. Xylan 1,4-beta-xylosidase involved in the hydrolysis of xylan, a major structural heterogeneous polysaccharide found in plant biomass representing the second most abundant polysaccharide in the biosphere, after cellulose. The protein is Probable exo-1,4-beta-xylosidase bxlB (bxlB) of Aspergillus flavus (strain ATCC 200026 / FGSC A1120 / IAM 13836 / NRRL 3357 / JCM 12722 / SRRC 167).